The primary structure comprises 440 residues: uncharacterized protein (440 aa).

A signal peptide spans 1–17; that stretch reads MDRFFCTVWVWSVLFGA. A lipid anchor (N-palmitoyl cysteine) is attached at C18. A lipid anchor (S-diacylglycerol cysteine) is attached at C18. The segment at 241-268 is disordered; it reads SALQERPSSPEPVVSTIPSPEGEENSAA.

Its subcellular location is the cell membrane. This is an uncharacterized protein from Treponema pallidum (strain Nichols).